The sequence spans 508 residues: Metalloprotease TIKI1 (508 aa).

The first 23 residues, 1 to 23 (MVIIWNIFLPAFLLVLAKASLRS), serve as a signal peptide directing secretion. The Extracellular segment spans residues 24 to 485 (SRDSANCKLN…KYIKAAQSVS (462 aa)). N-linked (GlcNAc...) asparagine glycans are attached at residues Asn-219, Asn-228, Asn-277, and Asn-335. Residues 486–506 (FSLSIPSAFLLLAWCFQQVAV) traverse the membrane as a helical segment. Topologically, residues 507 to 508 (LQ) are cytoplasmic.

This sequence belongs to the TIKI family. It depends on Mn(2+) as a cofactor. The cofactor is Co(2+). In terms of tissue distribution, zygotically expressed in the Spemann-Mangold organizer, in particular in the head Spemann-Mangold organizer region responsible for anterior patterning.

It localises to the cell membrane. In terms of biological role, metalloprotease that acts as a negative regulator of the Wnt signaling pathway: expressed in the Spemann-Mangold organizer and is required for anterior-neural patterning in head formation in embryos. Acts by mediating the cleavage of the N-terminal residues of a subset of Wnt proteins. Following cleavage, Wnt proteins become oxidized and form large disulfide-bond oligomers, leading to their inactivation. Able to cleave wnt8. The chain is Metalloprotease TIKI1 (trabd2a) from Xenopus tropicalis (Western clawed frog).